The primary structure comprises 380 residues: Large ribosomal subunit protein mL38 (380 aa).

Residues 1-26 (MAAPWWRAAFSVTGRCRGISTSASLS) constitute a mitochondrion transit peptide. The stretch at 98–123 (SRTQKLQERKRFLQELRANSEEERAA) forms a coiled coil.

This sequence belongs to the phosphatidylethanolamine-binding protein family. Mitochondrion-specific ribosomal protein mL38 subfamily. Component of the mitochondrial ribosome large subunit (39S) which comprises a 16S rRNA and about 50 distinct proteins.

It localises to the mitochondrion. In Rattus norvegicus (Rat), this protein is Large ribosomal subunit protein mL38 (Mrpl38).